The following is a 337-amino-acid chain: Ketol-acid reductoisomerase (NADP(+)) (337 aa).

In terms of domain architecture, KARI N-terminal Rossmann spans 3 to 183 (IELFYDADAD…GGGRAGIIPT (181 aa)). NADP(+) is bound by residues 26–29 (YGSQ), R49, S52, S54, and 84–87 (DTSQ). H109 is an active-site residue. G135 contributes to the NADP(+) binding site. Residues 184–329 (TFEAETVTDL…AKLRDLMSWV (146 aa)) form the KARI C-terminal knotted domain. Residues D192, E196, E228, and E232 each contribute to the Mg(2+) site. S253 is a substrate binding site.

The protein belongs to the ketol-acid reductoisomerase family. Mg(2+) is required as a cofactor.

The enzyme catalyses (2R)-2,3-dihydroxy-3-methylbutanoate + NADP(+) = (2S)-2-acetolactate + NADPH + H(+). It catalyses the reaction (2R,3R)-2,3-dihydroxy-3-methylpentanoate + NADP(+) = (S)-2-ethyl-2-hydroxy-3-oxobutanoate + NADPH + H(+). It functions in the pathway amino-acid biosynthesis; L-isoleucine biosynthesis; L-isoleucine from 2-oxobutanoate: step 2/4. It participates in amino-acid biosynthesis; L-valine biosynthesis; L-valine from pyruvate: step 2/4. Involved in the biosynthesis of branched-chain amino acids (BCAA). Catalyzes an alkyl-migration followed by a ketol-acid reduction of (S)-2-acetolactate (S2AL) to yield (R)-2,3-dihydroxy-isovalerate. In the isomerase reaction, S2AL is rearranged via a Mg-dependent methyl migration to produce 3-hydroxy-3-methyl-2-ketobutyrate (HMKB). In the reductase reaction, this 2-ketoacid undergoes a metal-dependent reduction by NADPH to yield (R)-2,3-dihydroxy-isovalerate. The sequence is that of Ketol-acid reductoisomerase (NADP(+)) from Corynebacterium efficiens (strain DSM 44549 / YS-314 / AJ 12310 / JCM 11189 / NBRC 100395).